The following is a 255-amino-acid chain: Octanoyltransferase (255 aa).

Residues 54–238 enclose the BPL/LPL catalytic domain; the sequence is GDANELVWLL…SFTTIFGATV (185 aa). Substrate is bound by residues 92–99, 167–169, and 180–182; these read RGGQLTYH, AIG, and GIA. Cys198 acts as the Acyl-thioester intermediate in catalysis.

It belongs to the LipB family.

It localises to the cytoplasm. The catalysed reaction is octanoyl-[ACP] + L-lysyl-[protein] = N(6)-octanoyl-L-lysyl-[protein] + holo-[ACP] + H(+). Its pathway is protein modification; protein lipoylation via endogenous pathway; protein N(6)-(lipoyl)lysine from octanoyl-[acyl-carrier-protein]: step 1/2. Catalyzes the transfer of endogenously produced octanoic acid from octanoyl-acyl-carrier-protein onto the lipoyl domains of lipoate-dependent enzymes. Lipoyl-ACP can also act as a substrate although octanoyl-ACP is likely to be the physiological substrate. This Rhodopseudomonas palustris (strain BisB5) protein is Octanoyltransferase.